Consider the following 432-residue polypeptide: Adenylosuccinate synthetase (432 aa).

GTP contacts are provided by residues 13–19 and 41–43; these read GDEGKGK and GHT. Residue D14 is the Proton acceptor of the active site. Residues D14 and G41 each contribute to the Mg(2+) site. IMP contacts are provided by residues 14 to 17, 39 to 42, T130, R144, Q225, T240, and R306; these read DEGK and NAGH. The active-site Proton donor is H42. A substrate-binding site is contributed by 302–308; it reads TVTGRAR. GTP-binding positions include R308, 334–336, and 416–418; these read KLD and STG.

The protein belongs to the adenylosuccinate synthetase family. In terms of assembly, homodimer. Mg(2+) serves as cofactor.

It localises to the cytoplasm. It carries out the reaction IMP + L-aspartate + GTP = N(6)-(1,2-dicarboxyethyl)-AMP + GDP + phosphate + 2 H(+). The protein operates within purine metabolism; AMP biosynthesis via de novo pathway; AMP from IMP: step 1/2. Functionally, plays an important role in the de novo pathway of purine nucleotide biosynthesis. Catalyzes the first committed step in the biosynthesis of AMP from IMP. The chain is Adenylosuccinate synthetase from Herminiimonas arsenicoxydans.